A 355-amino-acid chain; its full sequence is Polyferredoxin protein FwdF (355 aa).

4Fe-4S ferredoxin-type domains follow at residues 24–53, 64–93, 108–137, 147–176, 187–216, 235–264, 267–296, and 304–333; these read RELC…MGPL, PKLD…LKIN, RDIK…VERE, GEIN…LKYN, TDIE…VICY, GKTV…VEKP, GELI…FPKP, and PRII…VKRT. [4Fe-4S] cluster-binding residues include C33, C36, C39, C43, C73, C76, C79, C83, C117, C120, C123, C127, C156, C159, C162, C166, C196, C199, C202, C206, C244, C247, C250, C254, C276, C279, C282, C286, C313, C316, C319, and C323.

The cofactor is [4Fe-4S] cluster.

The sequence is that of Polyferredoxin protein FwdF (fwdF) from Methanocaldococcus jannaschii (strain ATCC 43067 / DSM 2661 / JAL-1 / JCM 10045 / NBRC 100440) (Methanococcus jannaschii).